Here is a 606-residue protein sequence, read N- to C-terminus: Elongation factor 4 (606 aa).

The region spanning 7–189 (SRIRNFCIIA…AVVDRVPPPK (183 aa)) is the tr-type G domain. GTP-binding positions include 19–24 (DHGKST) and 136–139 (NKID).

This sequence belongs to the TRAFAC class translation factor GTPase superfamily. Classic translation factor GTPase family. LepA subfamily.

It localises to the cell inner membrane. The enzyme catalyses GTP + H2O = GDP + phosphate + H(+). Functionally, required for accurate and efficient protein synthesis under certain stress conditions. May act as a fidelity factor of the translation reaction, by catalyzing a one-codon backward translocation of tRNAs on improperly translocated ribosomes. Back-translocation proceeds from a post-translocation (POST) complex to a pre-translocation (PRE) complex, thus giving elongation factor G a second chance to translocate the tRNAs correctly. Binds to ribosomes in a GTP-dependent manner. The protein is Elongation factor 4 of Synechococcus sp. (strain CC9605).